The sequence spans 135 residues: Large ribosomal subunit protein bL17 (135 aa).

It belongs to the bacterial ribosomal protein bL17 family. As to quaternary structure, part of the 50S ribosomal subunit. Contacts protein L32.

The protein is Large ribosomal subunit protein bL17 of Listeria innocua serovar 6a (strain ATCC BAA-680 / CLIP 11262).